Reading from the N-terminus, the 150-residue chain is SsrA-binding protein (150 aa).

It belongs to the SmpB family.

It localises to the cytoplasm. In terms of biological role, required for rescue of stalled ribosomes mediated by trans-translation. Binds to transfer-messenger RNA (tmRNA), required for stable association of tmRNA with ribosomes. tmRNA and SmpB together mimic tRNA shape, replacing the anticodon stem-loop with SmpB. tmRNA is encoded by the ssrA gene; the 2 termini fold to resemble tRNA(Ala) and it encodes a 'tag peptide', a short internal open reading frame. During trans-translation Ala-aminoacylated tmRNA acts like a tRNA, entering the A-site of stalled ribosomes, displacing the stalled mRNA. The ribosome then switches to translate the ORF on the tmRNA; the nascent peptide is terminated with the 'tag peptide' encoded by the tmRNA and targeted for degradation. The ribosome is freed to recommence translation, which seems to be the essential function of trans-translation. The protein is SsrA-binding protein of Coprothermobacter proteolyticus (strain ATCC 35245 / DSM 5265 / OCM 4 / BT).